The primary structure comprises 434 residues: ATP-dependent protease ATPase subunit HslU (434 aa).

Residues I18, 60–65 (GVGKTE), D247, E312, and R384 contribute to the ATP site.

This sequence belongs to the ClpX chaperone family. HslU subfamily. A double ring-shaped homohexamer of HslV is capped on each side by a ring-shaped HslU homohexamer. The assembly of the HslU/HslV complex is dependent on binding of ATP.

The protein resides in the cytoplasm. ATPase subunit of a proteasome-like degradation complex; this subunit has chaperone activity. The binding of ATP and its subsequent hydrolysis by HslU are essential for unfolding of protein substrates subsequently hydrolyzed by HslV. HslU recognizes the N-terminal part of its protein substrates and unfolds these before they are guided to HslV for hydrolysis. In Brucella melitensis biotype 1 (strain ATCC 23456 / CCUG 17765 / NCTC 10094 / 16M), this protein is ATP-dependent protease ATPase subunit HslU.